Here is a 160-residue protein sequence, read N- to C-terminus: Cytochrome b6-f complex subunit 4 (160 aa).

Transmembrane regions (helical) follow at residues 36-56, 95-115, and 131-151; these read LLYI…GLAV, LLGV…PFLE, and TVFL…TLPI.

This sequence belongs to the cytochrome b family. PetD subfamily. The 4 large subunits of the cytochrome b6-f complex are cytochrome b6, subunit IV (17 kDa polypeptide, petD), cytochrome f and the Rieske protein, while the 4 small subunits are petG, petL, petM and petN. The complex functions as a dimer.

Its subcellular location is the plastid. It is found in the chloroplast thylakoid membrane. Component of the cytochrome b6-f complex, which mediates electron transfer between photosystem II (PSII) and photosystem I (PSI), cyclic electron flow around PSI, and state transitions. In Daucus carota (Wild carrot), this protein is Cytochrome b6-f complex subunit 4.